Here is a 176-residue protein sequence, read N- to C-terminus: MIDDDGYRPNVGIVICNRQGQVMWARRFGQHSWQFPQGGINPGESAEQAMYRELFEEVGLSRKDVRILASTRNWLRYKLPKRLVRWDTKPVCIGQKQKWFLLQLVSGDAEIHMPTSSTPEFDGWRWVSYWYPVRQVVSFKRDVYRRVMKEFASVVMSLQENTPKPQNTSAYRRKRG.

The Nudix hydrolase domain maps to 6–149; that stretch reads GYRPNVGIVI…KRDVYRRVMK (144 aa). Positions 38–59 match the Nudix box motif; the sequence is GGINPGESAEQAMYRELFEEVG.

The protein belongs to the Nudix hydrolase family. RppH subfamily. The cofactor is a divalent metal cation.

Accelerates the degradation of transcripts by removing pyrophosphate from the 5'-end of triphosphorylated RNA, leading to a more labile monophosphorylated state that can stimulate subsequent ribonuclease cleavage. This is RNA pyrophosphohydrolase from Shigella boydii serotype 4 (strain Sb227).